Reading from the N-terminus, the 272-residue chain is Phosphate import ATP-binding protein PstB (272 aa).

One can recognise an ABC transporter domain in the interval 20–267 (VKKEVVYETN…PADQRTADYI (248 aa)). ATP is bound at residue 58–65 (GPSGCGKS).

The protein belongs to the ABC transporter superfamily. Phosphate importer (TC 3.A.1.7) family. The complex is composed of two ATP-binding proteins (PstB), two transmembrane proteins (PstC and PstA) and a solute-binding protein (PstS).

The protein resides in the cell membrane. The catalysed reaction is phosphate(out) + ATP + H2O = ADP + 2 phosphate(in) + H(+). Its function is as follows. Part of the ABC transporter complex PstSACB involved in phosphate import. Responsible for energy coupling to the transport system. The protein is Phosphate import ATP-binding protein PstB of Geobacillus kaustophilus (strain HTA426).